Consider the following 478-residue polypeptide: Probable L-ascorbate peroxidase 8, chloroplastic (478 aa).

Over residues 1–13 (MAERIAASLLPAA) the composition is skewed to low complexity. Disordered stretches follow at residues 1–31 (MAER…VSAA) and 44–66 (GGLR…RSGR). The transit peptide at 1–76 (MAERIAASLL…AGAGARAVVR (76 aa)) directs the protein to the chloroplast. Residues 14-26 (SPSPAPSPPPPRP) are compositionally biased toward pro residues. The active-site Proton acceptor is the histidine 117. The tract at residues 245-276 (AHTLGRSRPDRSGWGKPETKYTKDGPGEPGGQ) is disordered. Residue histidine 246 participates in heme b binding. Threonine 247 is a K(+) binding site. Positions 251–270 (SRPDRSGWGKPETKYTKDGP) are enriched in basic and acidic residues. 2 residues coordinate K(+): threonine 279 and aspartate 286. A disordered region spans residues 346–417 (AKFDPPEGFS…DNNGAAPQPE (72 aa)). Residues 369-381 (PAPAPAAAPPPPP) show a composition bias toward pro residues. Low complexity predominate over residues 394 to 406 (PVTVGAAVASSPA). Residues 458-478 (YFLNIMLLIGGLAFLTSLLGS) form a helical membrane-spanning segment.

The protein belongs to the peroxidase family. Ascorbate peroxidase subfamily. Interacts with SWEET11/OS8N3. It depends on heme b as a cofactor. Expressed in roots, leaves, stems and flowers. Expressed in leaves, shoots and panicles. Expressed at low levels in roots.

Its subcellular location is the plastid. It is found in the chloroplast thylakoid membrane. It catalyses the reaction L-ascorbate + H2O2 = L-dehydroascorbate + 2 H2O. Its function is as follows. Involved in defense response and tolerance to the bacterial pathogen Xanthomonas oryzae pv. oryzae (Xoo). Plays an important role in hydrogen peroxide removal during infection by Xoo. Involved in response to abiotic stress. Plays a role in hydrogen peroxide removal durings salt stress. This Oryza sativa subsp. japonica (Rice) protein is Probable L-ascorbate peroxidase 8, chloroplastic.